We begin with the raw amino-acid sequence, 389 residues long: Lipid-A-disaccharide synthase (389 aa).

Belongs to the LpxB family.

It catalyses the reaction a lipid X + a UDP-2-N,3-O-bis[(3R)-3-hydroxyacyl]-alpha-D-glucosamine = a lipid A disaccharide + UDP + H(+). The protein operates within bacterial outer membrane biogenesis; LPS lipid A biosynthesis. Condensation of UDP-2,3-diacylglucosamine and 2,3-diacylglucosamine-1-phosphate to form lipid A disaccharide, a precursor of lipid A, a phosphorylated glycolipid that anchors the lipopolysaccharide to the outer membrane of the cell. This is Lipid-A-disaccharide synthase from Paraburkholderia phytofirmans (strain DSM 17436 / LMG 22146 / PsJN) (Burkholderia phytofirmans).